Here is a 252-residue protein sequence, read N- to C-terminus: 3-dehydroquinate dehydratase (252 aa).

3-dehydroquinate-binding positions include Ser21, 46 to 48, and Arg82; that span reads EWR. His143 serves as the catalytic Proton donor/acceptor. Residue Lys170 is the Schiff-base intermediate with substrate of the active site. 3-dehydroquinate contacts are provided by Arg213, Ser232, and Gln236.

It belongs to the type-I 3-dehydroquinase family. Homodimer.

It carries out the reaction 3-dehydroquinate = 3-dehydroshikimate + H2O. Its pathway is metabolic intermediate biosynthesis; chorismate biosynthesis; chorismate from D-erythrose 4-phosphate and phosphoenolpyruvate: step 3/7. Inhibited by (2R)-2-methyl-3-dehydroquinic acid. Functionally, involved in the third step of the chorismate pathway, which leads to the biosynthesis of aromatic amino acids. Catalyzes the cis-dehydration of 3-dehydroquinate (DHQ) and introduces the first double bond of the aromatic ring to yield 3-dehydroshikimate. The reaction involves the formation of an imine intermediate between the keto group of 3-dehydroquinate and the epsilon-amino group of a Lys-170 at the active site. The protein is 3-dehydroquinate dehydratase of Salmonella typhimurium (strain LT2 / SGSC1412 / ATCC 700720).